We begin with the raw amino-acid sequence, 634 residues long: Phosphatase and actin regulator 2 (634 aa).

Disordered stretches follow at residues 1-32, 84-344, 412-471, and 485-508; these read MDNA…KRKG, LPDQ…PLED, PQLL…ALAS, and NRPS…ERQE. Aspartate 2 carries the N-myristoyl glycine lipid modification. Residues 13-26 show a composition bias toward polar residues; it reads IANSDGPTAGSQTP. Residue serine 16 is modified to Phosphoserine. Residue threonine 25 is modified to Phosphothreonine. The RPEL 1 repeat unit spans residues 60–85; that stretch reads AVLERKISTRQSREELIRRGVLKELP. Composition is skewed to basic and acidic residues over residues 108–120 and 137–147; these read ESTR…KSEE and EDKKENTENHS. A compositionally biased stretch (pro residues) spans 153-162; sequence PALPPSAPPK. 2 stretches are compositionally biased toward low complexity: residues 231–247 and 276–290; these read GSKA…SSRP and TSHL…GTSD. Residues 291 to 304 are compositionally biased toward basic and acidic residues; the sequence is LKGEPAETRVESFK. Residues 324–341 are compositionally biased toward pro residues; sequence VPPPPVAPAPSPLAPPLP. Serine 423 is subject to Phosphoserine. Residues 452–464 show a composition bias toward acidic residues; the sequence is TDDEDEDEDEDGS. RPEL repeat units lie at residues 477 to 502, 515 to 540, and 553 to 578; these read DTLA…QRTS, TKLV…KQKN, and RRLS…RFNE. Over residues 488-508 the composition is skewed to basic and acidic residues; sequence SKKELEDKNILQRTSEEERQE. A phosphoserine mark is found at serine 522 and serine 560.

Belongs to the phosphatase and actin regulator family. Binds PPP1CA and actin.

Its subcellular location is the membrane. This chain is Phosphatase and actin regulator 2 (PHACTR2), found in Homo sapiens (Human).